Here is a 233-residue protein sequence, read N- to C-terminus: MQNERRIAQRFLEDKQLPYSSNELITMALTHPSYAQEKNTVANNQRLEFLGDAVLNLVVAEYLYNHYGRKAEGELTKIRAKVVCEDALAIFARNINLGQYLLLGRGEEMSGGRKRKSILADAVEAVIGAIYLDQGLETVQRFIIRQLEELISETASGDYYDYKSKLQELVQARDKENVSYAIIEESGPAHAKVFVAGVYYREQLLATGEGKSKKEAEQKAAQKVLQDNLVPGT.

The RNase III domain occupies 8–135 (AQRFLEDKQL…VIGAIYLDQG (128 aa)). Glutamate 48 contacts Mg(2+). Aspartate 52 is a catalytic residue. Mg(2+) contacts are provided by aspartate 121 and glutamate 124. Glutamate 124 is an active-site residue. Positions 161–230 (DYKSKLQELV…AQKVLQDNLV (70 aa)) constitute a DRBM domain.

This sequence belongs to the ribonuclease III family. In terms of assembly, homodimer. The cofactor is Mg(2+).

The protein localises to the cytoplasm. The catalysed reaction is Endonucleolytic cleavage to 5'-phosphomonoester.. In terms of biological role, digests double-stranded RNA. Involved in the processing of primary rRNA transcript to yield the immediate precursors to the large and small rRNAs (23S and 16S). Processes some mRNAs, and tRNAs when they are encoded in the rRNA operon. Processes pre-crRNA and tracrRNA of type II CRISPR loci if present in the organism. The chain is Ribonuclease 3 from Syntrophomonas wolfei subsp. wolfei (strain DSM 2245B / Goettingen).